We begin with the raw amino-acid sequence, 303 residues long: Vacuolar protein sorting-associated protein 26B (303 aa).

The protein belongs to the VPS26 family. In terms of assembly, component of the retromer complex which consists of VPS29 (MAG1), VPS26 (VPS26A or VPS26B), VPS35 (VPS35A or VPS35B or VPS35C), VPS5/17 (SNX1 or SNX2A or SNX2B). Component of a retromer subcomplex consisting of VPS29 (MAG1), VPS26 (VPS26A or VPS26B), VPS35 (VPS35A or VPS35B or VPS35C).

Its subcellular location is the cytoplasm. It localises to the endosome membrane. It is found in the prevacuolar compartment membrane. The protein resides in the golgi apparatus. The protein localises to the trans-Golgi network membrane. Its function is as follows. Plays a role in vesicular protein sorting. Component of the membrane-associated retromer complex which is essential in endosome-to-Golgi retrograde transport. The VPS29-VPS26-VPS35 subcomplex may be involved in recycling of specific cargos from endosome to the plasma membrane. The sequence is that of Vacuolar protein sorting-associated protein 26B (VPS26B) from Arabidopsis thaliana (Mouse-ear cress).